A 665-amino-acid chain; its full sequence is Prelamin-A/C (665 aa).

Met1 carries the post-translational modification N-acetylmethionine. Residues 1–25 form a disordered region; sequence METPSQRRATRSGAQASSTPLSPTR. The interval 1–33 is head; the sequence is METPSQRRATRSGAQASSTPLSPTRITRLQEKE. The interval 1 to 130 is interaction with MLIP; that stretch reads METPSQRRAT…TKKEGDLLAA (130 aa). Residue Thr3 is modified to Phosphothreonine. Ser5 carries the post-translational modification Phosphoserine. The residue at position 10 (Thr10) is a Phosphothreonine. 2 positions are modified to phosphoserine: Ser12 and Ser18. Thr19 is modified (phosphothreonine). Phosphoserine is present on Ser22. Positions 31 to 387 constitute an IF rod domain; that stretch reads EKEDLQELND…KLLEGEEERL (357 aa). At Lys32 the chain carries N6-acetyllysine; alternate. Lys32 is modified (N6-succinyllysine; alternate). Residue Lys32 forms a Glycyl lysine isopeptide (Lys-Gly) (interchain with G-Cter in SUMO2); alternate linkage. The segment at 34 to 70 is coil 1A; that stretch reads DLQELNDRLAVYIDRVRSLETENAGLRLRITESEEVV. Phosphoserine occurs at positions 51, 66, and 71. The linker 1 stretch occupies residues 71–80; it reads SREVSGIKAA. N6-acetyllysine occurs at positions 78 and 97. The tract at residues 81–218 is coil 1B; the sequence is YEAELGDARK…NIYSEELRET (138 aa). Lys97 is covalently cross-linked (Glycyl lysine isopeptide (Lys-Gly) (interchain with G-Cter in SUMO2)). At Ser107 the chain carries Phosphoserine. N6-acetyllysine is present on residues Lys108, Lys114, Lys123, Lys135, Lys144, and Lys155. Lys171 carries the N6-acetyllysine; alternate modification. Lys171 carries the post-translational modification N6-succinyllysine; alternate. Residue Lys171 forms a Glycyl lysine isopeptide (Lys-Gly) (interchain with G-Cter in SUMO2); alternate linkage. An N6-acetyllysine mark is found at Lys180, Lys201, and Lys208. Lys201 participates in a covalent cross-link: Glycyl lysine isopeptide (Lys-Gly) (interchain with G-Cter in SUMO2); alternate. A Glycyl lysine isopeptide (Lys-Gly) (interchain with G-Cter in SUMO); alternate cross-link involves residue Lys201. A Glycyl lysine isopeptide (Lys-Gly) (interchain with G-Cter in SUMO2) cross-link involves residue Lys208. Ser212 is subject to Phosphoserine. Glycyl lysine isopeptide (Lys-Gly) (interchain with G-Cter in SUMO2) cross-links involve residues Lys219 and Lys233. The linker 2 stretch occupies residues 219-242; the sequence is KRRHETRLVEIDNGKQREFESRLA. N6-acetyllysine is present on residues Lys233, Lys260, Lys265, and Lys270. The interval 243-383 is coil 2; that stretch reads DALQELRAQH…HAYRKLLEGE (141 aa). Lys260 participates in a covalent cross-link: Glycyl lysine isopeptide (Lys-Gly) (interchain with G-Cter in SUMO2); alternate. Lys270 is covalently cross-linked (Glycyl lysine isopeptide (Lys-Gly) (interchain with G-Cter in SUMO2); alternate). Phosphoserine is present on residues Ser277, Ser282, Ser301, and Ser307. A Glycyl lysine isopeptide (Lys-Gly) (interchain with G-Cter in SUMO2); alternate cross-link involves residue Lys311. An N6-acetyllysine mark is found at Lys311, Lys316, and Lys341. Glycyl lysine isopeptide (Lys-Gly) (interchain with G-Cter in SUMO2) cross-links involve residues Lys366 and Lys378. The segment at 384–442 is disordered; that stretch reads EERLRLSPSPTSQRSRGRASSHSSQSQGGGSVTKKRKLESSESRSSFSQHARTSGRVAV. Residues 384-665 are tail; it reads EERLRLSPSP…SQSSQNCSIM (282 aa). Phosphoserine is present on residues Ser390, Ser392, Ser395, Ser398, Ser403, Ser404, Ser406, Ser407, Ser409, and Ser414. Residue Ser392 is modified to Phosphoserine; by CDK1. The segment covering 395–409 has biased composition (low complexity); that stretch reads SQRSRGRASSHSSQS. Position 416 is a phosphothreonine (Thr416). Residues Lys417 and Lys420 each carry the N6-acetyllysine modification. Glycyl lysine isopeptide (Lys-Gly) (interchain with G-Cter in SUMO2) cross-links involve residues Lys417 and Lys420. Residues 417-422 carry the Nuclear localization signal motif; sequence KKRKLE. Phosphoserine is present on residues Ser423, Ser426, Ser429, and Ser431. Residues 428 to 545 form the LTD domain; that stretch reads SSFSQHARTS…EEVAMRKLVR (118 aa). Lys450 is covalently cross-linked (Glycyl lysine isopeptide (Lys-Gly) (interchain with G-Cter in SUMO2); alternate). 2 positions are modified to N6-acetyllysine: Lys450 and Lys457. Residues Ser458, Glu460, and Ser463 each carry the phosphoserine modification. Lys486 bears the N6-acetyllysine mark. Lys486 is covalently cross-linked (Glycyl lysine isopeptide (Lys-Gly) (interchain with G-Cter in SUMO2)). The residue at position 496 (Thr496) is a Phosphothreonine. Position 500 is a phosphoserine (Ser500). Phosphothreonine occurs at positions 505 and 510. Ser533 and Ser546 each carry phosphoserine. Thr548 is subject to Phosphothreonine. The tract at residues 553-577 is disordered; the sequence is NEDDDEDGEELLHHHRGSHCSGSGD. Ser570, Cys572, and Ser573 each carry phosphoserine. Lys599 participates in a covalent cross-link: Glycyl lysine isopeptide (Lys-Gly) (interchain with G-Cter in SUMO2); alternate. A Glycyl lysine isopeptide (Lys-Gly) (interchain with G-Cter in SUMO1); alternate cross-link involves residue Lys599. 4 positions are modified to phosphoserine: Ser613, Ser614, Ser617, and Ser620. O-linked (GlcNAc) serine glycans are attached at residues Ser626 and Ser629. Ser629, Ser633, Ser637, and Ser653 each carry phosphoserine. Residues 648–662 constitute a propeptide, removed in Lamin-A/C form; the sequence is LLGNSSPRSQSSQNC. Cys662 carries the post-translational modification Cysteine methyl ester. The S-farnesyl cysteine moiety is linked to residue Cys662. A propeptide spans 663–665 (removed in Prelamin-A/C form and in Lamin-A/C form); it reads SIM.

Belongs to the intermediate filament family. As to quaternary structure, homodimer of lamin A and lamin C. Lamin dimers then assemble into dimeric head-to-tail polymers. Ultimately, two head-to-tail polymers assemble laterally into a protofilament with a uniformly shaped rod of 3.5 nm in diameter. Interacts with lamin-associated polypeptides IA, IB and TMPO-alpha, RB1 and with emerin. Proteolytically processed isoform A interacts with NARF. Interacts with SREBF1, SREBF2, SUN1, SUN2 and TMEM43. Interacts with TMEM201. Prelamin-A/C interacts with EMD. Interacts with DMPK; may regulate nuclear envelope stability. Interacts with MLIP. Interacts with SUV39H1; the interaction increases stability of SUV39H1. Interacts with ITSN1 isoform 2. Interacts with IFFO1; the interaction forms an interior nucleoskeleton and the recruitment to DNA double-strand breaks. In terms of assembly, interacts with EMD. Interacts (via C-terminus) with LEMD2 (via N-terminus) (in vitro). In terms of processing, proteolytic cleavage of the C-terminal of 18 residues of prelamin-A/C results in the production of lamin-A/C. The prelamin-A/C maturation pathway includes farnesylation of CAAX motif by protein farnesyltransferase (FNTA and FNTB), removal of the last three amino acids (-AAX) by RCE1/FACE2 and/or ZMPSTE24, methylation of the C-terminal cysteine by ICMT and endoproteolytic removal of the last 15 C-terminal amino acids by ZMPSTE24. Proteolytic cleavage requires prior farnesylation and methylation, and absence of these blocks cleavage. Post-translationally, farnesylation of prelamin-A/C facilitates nuclear envelope targeting. Phosphorylation plays a key role in lamin organization, subcellular localization and nuclear envelope disintegration. Phosphorylation by CDK1 at Ser-22 and Ser-392 at the onset of mitosis drives lamin disassembly and nuclear envelope breakdown. Phosphorylation at Ser-22 and Ser-392 during interphase promotes localization to the nucleoplasm and regulates lamina assembly. Phosphorylation at Ser-22, Ser-392 and Ser-629 during interphase causes redistribution between the nucleus and the cytoplasm. Phosphorylation at Ser-22 by CDK1 regulates matrix stiffness. Phosphorylation status of Ser-22 determines its localization between double-strand break (DSB) sites and the nuclear matrix. Phosphorylated by ATR at Ser-282 in response to DNA damage, leading to lamin disassembly and nuclear envelope rupture. Phosphorylation also regulates stability in micronuclei arising from genome instability: phosphorylation at Ser-395 by ATR in response to genome instability and double-stranded DNA breaks primes LMNA for subsequent phosphorylation at Ser-392 by CDK1 and micronuclei envelope rupture. The rupture of micronuclear envelope triggers the cGAS-STING pathway thereby activating the type I interferon response and innate immunity. In terms of processing, isoform C is phosphorylated on Ser-392, Ser-407 and Ser-409 at interphase. Post-translationally, acetylation by KAT8 is required for nuclear architecture. Sumoylation is necessary for the localization to the nuclear envelope. In terms of processing, the N-terminus is blocked. Expressed in liver and in bone marrow (at protein level). Expressed in cardiomyocytes. As to expression, specifically expressed in germ cells.

Its subcellular location is the nucleus lamina. The protein localises to the nucleus envelope. It is found in the nucleus. It localises to the nucleoplasm. The protein resides in the nucleus matrix. In terms of biological role, lamins are intermediate filament proteins that assemble into a filamentous meshwork, and which constitute the major components of the nuclear lamina, a fibrous layer on the nucleoplasmic side of the inner nuclear membrane. Lamins provide a framework for the nuclear envelope, bridging the nuclear envelope and chromatin, thereby playing an important role in nuclear assembly, chromatin organization, nuclear membrane and telomere dynamics. Lamin A and C also regulate matrix stiffness by conferring nuclear mechanical properties. The structural integrity of the lamina is strictly controlled by the cell cycle, as seen by the disintegration and formation of the nuclear envelope in prophase and telophase, respectively. Lamin A and C are present in equal amounts in the lamina of mammals. Also invoved in DNA repair: recruited by DNA repair proteins XRCC4 and IFFO1 to the DNA double-strand breaks (DSBs) to prevent chromosome translocation by immobilizing broken DNA ends. Required for normal development of peripheral nervous system and skeletal muscle and for muscle satellite cell proliferation. Required for osteoblastogenesis and bone formation. Also prevents fat infiltration of muscle and bone marrow, helping to maintain the volume and strength of skeletal muscle and bone. Required for cardiac homeostasis. Its function is as follows. Prelamin-A/C can accelerate smooth muscle cell senescence. It acts to disrupt mitosis and induce DNA damage in vascular smooth muscle cells (VSMCs), leading to mitotic failure, genomic instability, and premature senescence. Isoform C2 may have a role in determining the organization of nuclear and chromosomal structures during spermatogenesis. The protein is Prelamin-A/C (Lmna) of Mus musculus (Mouse).